A 360-amino-acid chain; its full sequence is DNA integrity scanning protein DisA (360 aa).

The DAC domain occupies 9–147; the sequence is DDEIIEVLRM…GSRKYILRET (139 aa). ATP contacts are provided by residues Gly-76, Leu-94, and 107–111; that span reads TRHKT.

It belongs to the DisA family. Homooctamer. Mg(2+) serves as cofactor.

The catalysed reaction is 2 ATP = 3',3'-c-di-AMP + 2 diphosphate. Functionally, participates in a DNA-damage check-point that is active prior to asymmetric division when DNA is damaged. DisA forms globular foci that rapidly scan along the chromosomes during sporulation, searching for lesions. When a lesion is present, DisA pauses at the lesion site. This triggers a cellular response that culminates in a temporary block in sporulation initiation. Its function is as follows. Also has diadenylate cyclase activity, catalyzing the condensation of 2 ATP molecules into cyclic di-AMP (c-di-AMP). c-di-AMP acts as a signaling molecule that couples DNA integrity with progression of sporulation. The rise in c-di-AMP level generated by DisA while scanning the chromosome, operates as a positive signal that advances sporulation; upon encountering a lesion, the DisA focus arrests at the damaged site and halts c-di-AMP synthesis. The sequence is that of DNA integrity scanning protein DisA from Acetivibrio thermocellus (strain ATCC 27405 / DSM 1237 / JCM 9322 / NBRC 103400 / NCIMB 10682 / NRRL B-4536 / VPI 7372) (Clostridium thermocellum).